Here is a 1620-residue protein sequence, read N- to C-terminus: Putative zinc carboxypeptidase (1620 aa).

Topologically, residues 1-1367 are extracellular; that stretch reads MLFKNEDSGN…SYDFLYFDEN (1367 aa). The N-linked (GlcNAc...) asparagine glycan is linked to Asn-19. Residues 32–74 form a disordered region; sequence RNDNKNNDNEDNKQDDEEKNDEDDNKSNLLLEENEENKRQGDK. Over residues 33 to 43 the composition is skewed to basic and acidic residues; the sequence is NDNKNNDNEDN. Residues 44-55 show a composition bias toward acidic residues; the sequence is KQDDEEKNDEDD. Residues Asn-56 and Asn-102 are each glycosylated (N-linked (GlcNAc...) asparagine). Positions 309–328 are disordered; the sequence is GNHYDAHESTNTYDEEKTRE. Asn-354, Asn-487, Asn-508, Asn-529, Asn-550, Asn-571, Asn-589, Asn-687, Asn-802, and Asn-1010 each carry an N-linked (GlcNAc...) asparagine glycan. Residues 497–559 are possible malaria epitope; sequence VNNLDSTVNY…NSTGNNINNI (63 aa). In terms of domain architecture, Peptidase M14 spans 1004-1261; sequence GENKKNNGTK…FYVQNYFEGY (258 aa). Residues His-1059 and Glu-1062 each coordinate Zn(2+). 2 N-linked (GlcNAc...) asparagine glycosylation sites follow: Asn-1064 and Asn-1141. His-1155 is a binding site for Zn(2+). Catalysis depends on Glu-1229, which acts as the Proton donor/acceptor. The disordered stretch occupies residues 1279–1329; it reads NIKGDDNINGDDNIKGGDNIKGDDNIKRDDNFQRDDNFQRDDNFQRGDNFH. The helical transmembrane segment at 1368 to 1388 threads the bilayer; the sequence is LLFMTGVSFGICLFKFINFLS. At 1389–1620 the chain is on the cytoplasmic side; it reads YHKSSICRRT…SKRKKVIVIL (232 aa). The segment at 1560 to 1620 is disordered; that stretch reads PNGKYKGPGF…SKRKKVIVIL (61 aa). The segment covering 1581 to 1597 has biased composition (basic and acidic residues); it reads NKNESKTEKKSKTENKS. Over residues 1598–1620 the composition is skewed to basic residues; that stretch reads KSKSKNKSKSKNKSKRKKVIVIL.

It belongs to the peptidase M14 family. It depends on Zn(2+) as a cofactor.

The protein resides in the membrane. The protein is Putative zinc carboxypeptidase of Plasmodium falciparum (isolate 3D7).